A 65-amino-acid polypeptide reads, in one-letter code: Transcriptional regulatory protein SenS (65 aa).

A DNA-binding region (H-T-H motif) is located at residues 11–31; sequence RFRKRKTYGNQILPLELLIEK.

It to B.natto SenN.

Regulates the expression of extracellular-protein genes of Bacillus subtilis. The protein is Transcriptional regulatory protein SenS (senS) of Bacillus subtilis (strain 168).